Here is a 574-residue protein sequence, read N- to C-terminus: Myo-inositol transporter FST1 (574 aa).

The Cytoplasmic segment spans residues 1 to 76 (MGKSRQNSTT…VQFANPKHFT (76 aa)). Residues 77–97 (WLLVAFASMGGLLSGLDQSLI) form a helical membrane-spanning segment. Topologically, residues 98–115 (SGANLFLPDDLGLTEHEN) are extracellular. Residues 116 to 136 (SLVNSGMPLGAVGGALLLSPA) form a helical membrane-spanning segment. Residues 137–143 (NEYFGRK) lie on the Cytoplasmic side of the membrane. A helical membrane pass occupies residues 144 to 164 (GAIIISIILYTIGAALEAGSI). Residues 165–173 (NFGMIVSSR) are Extracellular-facing. A helical membrane pass occupies residues 174 to 194 (VILGLGVGLEGGTVPVYVAET). Residues 195 to 205 (VERRIRGNLVS) are Cytoplasmic-facing. A helical transmembrane segment spans residues 206–226 (LYQFNIALGEVLGYAVGAIFL). At 227 to 233 (NVPGNWR) the chain is on the extracellular side. A helical transmembrane segment spans residues 234 to 254 (YILGSSLLFSTIMFFGMLFLP). At 255–330 (ESPRFLIHQK…RARRALVYAN (76 aa)) the chain is on the cytoplasmic side. Residues 331–351 (IMILLGQLTGVNAIMYYMSVL) form a helical membrane-spanning segment. The Extracellular segment spans residues 352–363 (MNQIGFDKKESN). The helical transmembrane segment at 364 to 384 (YMSLVGGGSLLLGTIPAIFLM) threads the bilayer. The Cytoplasmic segment spans residues 385 to 390 (ERFGRR). Residues 391-411 (FWAITMLPGFFIGLVLIGVSY) traverse the membrane as a helical segment. Residues 412-426 (QFDVETQLQTVEGLY) lie on the Extracellular side of the membrane. A helical transmembrane segment spans residues 427 to 447 (LSGLIIYMGFFGSYACLTWVV). At 448-465 (PSEVYPTYLRSYGMTTSD) the chain is on the cytoplasmic side. The helical transmembrane segment at 466 to 486 (ALLFLASFIVTYNFTAMQNAM) threads the bilayer. Topologically, residues 487–490 (GKTG) are extracellular. A helical transmembrane segment spans residues 491-511 (LALGFYGGIAFIGEIYQIFFM). Residues 512–574 (PETKNKTLEE…PKDQVQVSHA (63 aa)) lie on the Cytoplasmic side of the membrane.

Belongs to the major facilitator superfamily. Sugar transporter (TC 2.A.1.1) family.

Its subcellular location is the cell membrane. The catalysed reaction is myo-inositol(out) + H(+)(out) = myo-inositol(in) + H(+)(in). In terms of biological role, transporter for myo-inositol. Also appears to transport the polyketide mycotoxin fumonisin B1 (FB1). Does not appear to transport hexose sugars. This is Myo-inositol transporter FST1 from Gibberella moniliformis (strain M3125 / FGSC 7600) (Maize ear and stalk rot fungus).